The sequence spans 425 residues: Probable mannosyltransferase KTR2 (425 aa).

At Met-1 to Lys-13 the chain is on the cytoplasmic side. The chain crosses the membrane as a helical; Signal-anchor for type II membrane protein span at residues Leu-14–Val-33. Residues Pro-34 to Gln-89 are stem region. Residues Pro-34–Ser-425 lie on the Lumenal side of the membrane. 4 N-linked (GlcNAc...) asparagine glycosylation sites follow: Asn-65, Asn-81, Asn-92, and Asn-167. The interval Arg-90–Ser-425 is catalytic. Residue Glu-313 is the Nucleophile of the active site.

This sequence belongs to the glycosyltransferase 15 family.

Its subcellular location is the golgi apparatus membrane. It participates in protein modification; protein glycosylation. Involved in N-linked glycosylation. Transfers an alpha-D-mannosyl residue from GDP-mannose into lipid-linked oligosaccharide, forming an alpha-(1-&gt;2)-D-mannosyl-D-mannose linkage. The sequence is that of Probable mannosyltransferase KTR2 (KTR2) from Saccharomyces cerevisiae (strain ATCC 204508 / S288c) (Baker's yeast).